A 502-amino-acid chain; its full sequence is D-alanine--D-alanyl carrier protein ligase (502 aa).

An ATP-binding site is contributed by 150-151; it reads TS. Residue Asp-195 participates in D-alanine binding. 290–295 is a binding site for ATP; sequence NTYGPT. Val-299 contributes to the D-alanine binding site. 2 residues coordinate ATP: Asp-381 and Lys-490. Lys-490 is a binding site for D-alanine.

It belongs to the ATP-dependent AMP-binding enzyme family. DltA subfamily.

The protein localises to the cytoplasm. It carries out the reaction holo-[D-alanyl-carrier protein] + D-alanine + ATP = D-alanyl-[D-alanyl-carrier protein] + AMP + diphosphate. It functions in the pathway cell wall biogenesis; lipoteichoic acid biosynthesis. In terms of biological role, catalyzes the first step in the D-alanylation of lipoteichoic acid (LTA), the activation of D-alanine and its transfer onto the D-alanyl carrier protein (Dcp) DltC. In an ATP-dependent two-step reaction, forms a high energy D-alanyl-AMP intermediate, followed by transfer of the D-alanyl residue as a thiol ester to the phosphopantheinyl prosthetic group of the Dcp. D-alanylation of LTA plays an important role in modulating the properties of the cell wall in Gram-positive bacteria, influencing the net charge of the cell wall. This Bacillus licheniformis (strain ATCC 14580 / DSM 13 / JCM 2505 / CCUG 7422 / NBRC 12200 / NCIMB 9375 / NCTC 10341 / NRRL NRS-1264 / Gibson 46) protein is D-alanine--D-alanyl carrier protein ligase.